The primary structure comprises 131 residues: Holo-[acyl-carrier-protein] synthase (131 aa).

Positions 8 and 63 each coordinate Mg(2+).

The protein belongs to the P-Pant transferase superfamily. AcpS family. Mg(2+) is required as a cofactor.

It localises to the cytoplasm. The catalysed reaction is apo-[ACP] + CoA = holo-[ACP] + adenosine 3',5'-bisphosphate + H(+). Functionally, transfers the 4'-phosphopantetheine moiety from coenzyme A to a Ser of acyl-carrier-protein. This chain is Holo-[acyl-carrier-protein] synthase, found in Shewanella pealeana (strain ATCC 700345 / ANG-SQ1).